We begin with the raw amino-acid sequence, 282 residues long: E3 ubiquitin-protein ligase SIAH1B (282 aa).

Polar residues predominate over residues 1 to 17 (MSRQAATALSTGTSKCP). The tract at residues 1-23 (MSRQAATALSTGTSKCPPSQRVP) is disordered. S19 carries the phosphoserine; by ATM and ATR modification. The segment at 41–76 (CPVCFDYVLPPILQCQSGHLVCSNCRPKLTCCPTCR) adopts an RING-type zinc-finger fold. Residues 90–282 (VANSVLFPCK…LGINVTISMC (193 aa)) form an SBD region. The segment at 93-153 (SVLFPCKYSA…VMPHLMHQHK (61 aa)) adopts an SIAH-type zinc-finger fold. Residues C98, C105, H117, C121, C128, C135, H147, and H152 each coordinate Zn(2+).

It belongs to the SINA (Seven in absentia) family. In terms of assembly, homodimer. Post-translationally, phosphorylated on Ser-19 by ATM and ATR. Widely expressed at low level in embryos and adults. Due to the high similarity between SIAH1A and SIAH1B, it is difficult to distinguish its own tissue specificity. Overexpressed in endothelial cells of adult lung.

It is found in the cytoplasm. The protein resides in the nucleus. The catalysed reaction is S-ubiquitinyl-[E2 ubiquitin-conjugating enzyme]-L-cysteine + [acceptor protein]-L-lysine = [E2 ubiquitin-conjugating enzyme]-L-cysteine + N(6)-ubiquitinyl-[acceptor protein]-L-lysine.. It participates in protein modification; protein ubiquitination. Its function is as follows. E3 ubiquitin-protein ligase that mediates ubiquitination and subsequent proteasomal degradation of target proteins. E3 ubiquitin ligases accept ubiquitin from an E2 ubiquitin-conjugating enzyme in the form of a thioester and then directly transfers the ubiquitin to targeted substrates. Mediates E3 ubiquitin ligase activity either through direct binding to substrates or by functioning as the essential RING domain subunit of larger E3 complexes. This is E3 ubiquitin-protein ligase SIAH1B (Siah1b) from Mus musculus (Mouse).